Reading from the N-terminus, the 1406-residue chain is DNA-directed RNA polymerase subunit beta' (1406 aa).

Cysteine 72, cysteine 74, cysteine 87, and cysteine 90 together coordinate Zn(2+). 3 residues coordinate Mg(2+): aspartate 462, aspartate 464, and aspartate 466. Zn(2+) contacts are provided by cysteine 816, cysteine 889, cysteine 896, and cysteine 899.

The protein belongs to the RNA polymerase beta' chain family. In terms of assembly, the RNAP catalytic core consists of 2 alpha, 1 beta, 1 beta' and 1 omega subunit. When a sigma factor is associated with the core the holoenzyme is formed, which can initiate transcription. Mg(2+) is required as a cofactor. Zn(2+) serves as cofactor.

It carries out the reaction RNA(n) + a ribonucleoside 5'-triphosphate = RNA(n+1) + diphosphate. Its function is as follows. DNA-dependent RNA polymerase catalyzes the transcription of DNA into RNA using the four ribonucleoside triphosphates as substrates. The chain is DNA-directed RNA polymerase subunit beta' from Psychrobacter sp. (strain PRwf-1).